A 211-amino-acid polypeptide reads, in one-letter code: HTH-type transcriptional regulator AlkX (211 aa).

In terms of domain architecture, HTH tetR-type spans 22-82 (ALLRDSVLDA…GYALRLADRL (61 aa)). The H-T-H motif DNA-binding region spans 45–64 (TLSDVARAAGISRQTIYNEF).

In terms of assembly, homodimer.

Its subcellular location is the cytoplasm. DNA-binding activity may be regulated by fatty acids. Its function is as follows. Represses the expression of the alkB-rubAB operon, which encodes the alkane hydroxylase AlkB and the rubredoxins RubA and RubB. Acts by binding to the promoter region of the operon. In addition, EMSA analysis show that AlkX can bind to the promoter region of mmpS1 and mmpL3 and to the intragenic region of mmpL11, suggesting that it may participate in the regulatory network that controls the expression of MmpL lipid transporters. The protein is HTH-type transcriptional regulator AlkX of Mycobacterium tuberculosis (strain ATCC 25618 / H37Rv).